Here is a 247-residue protein sequence, read N- to C-terminus: Ribosomal RNA processing protein 36 homolog (247 aa).

Disordered stretches follow at residues 1–29 (MDNQ…HLKD), 62–89 (RTQG…QRVP), 136–188 (SVEK…RELV), and 218–247 (GKLQ…QVDQ). Residues 8 to 23 (SSDDESPTDDCSDEGE) show a composition bias toward acidic residues. 2 stretches are compositionally biased toward basic and acidic residues: residues 136-153 (SVEK…RKNL) and 164-174 (ERSRKSAEAKR). Residues 218–240 (GKLQKYLTKRRKKTASKDRRHVP) are compositionally biased toward basic residues.

The protein belongs to the RRP36 family.

It is found in the nucleus. The protein localises to the nucleolus. Involved in the early processing steps of the pre-rRNA in the maturation pathway leading to the 18S rRNA. This is Ribosomal RNA processing protein 36 homolog from Nematostella vectensis (Starlet sea anemone).